Consider the following 261-residue polypeptide: Triosephosphate isomerase (261 aa).

10–12 (NWK) serves as a coordination point for substrate. H100 serves as the catalytic Electrophile. Catalysis depends on E172, which acts as the Proton acceptor. Substrate-binding positions include G178, S218, and 239–240 (GG).

This sequence belongs to the triosephosphate isomerase family. As to quaternary structure, homodimer.

It localises to the cytoplasm. The catalysed reaction is D-glyceraldehyde 3-phosphate = dihydroxyacetone phosphate. It functions in the pathway carbohydrate biosynthesis; gluconeogenesis. It participates in carbohydrate degradation; glycolysis; D-glyceraldehyde 3-phosphate from glycerone phosphate: step 1/1. Involved in the gluconeogenesis. Catalyzes stereospecifically the conversion of dihydroxyacetone phosphate (DHAP) to D-glyceraldehyde-3-phosphate (G3P). The polypeptide is Triosephosphate isomerase (Mycolicibacterium paratuberculosis (strain ATCC BAA-968 / K-10) (Mycobacterium paratuberculosis)).